An 858-amino-acid polypeptide reads, in one-letter code: MMEQYYEIKKQYPDAFLFYRVGDFYELFEDDAVKGAQILELTLTHRSNKTKNPIPMAGVPHMAVDTYVNTLVEKGYKVALCEQLEDPKKAKGMVKRGIIQLVTPGTMMNEGPNDAKDSNYLTSVVTTKSGFGLAYSDLSTGEIYSTHLKSFAAVSNELLSLRTREVVYNGPLTEQSKDFMHKANITVSAPTPIEGEHAEISYVEQNLTNGAEKSATRQLVGYLLSTQKRSLAHLQIAKSYEVNQYLQMSHTVQNNLELVASAKTGKKMGSLFWVLDKTHTAMGGRLLKQWLARPLLNVDIINHREKMVQALLDGYFTRENTIDALKGVYDLERLTGRIAFGNVNARELLQLSRSLQAVPVILDALNQSDSDVLTDFAKKIDPLKGVAELISTTLVKDPPLLTTEGGLIRDGVDKQLDRYRDAMNNGKKWLVQMETDERQKTGIENLKVGFNKVFGYYIQVSNGNKSKVPLDRYTRKQTLTNAERYITPELKEHENLILEAQTRSTDLEYDLFVQLRDEVKKYIPALQKLGNQLAALDVYCGFATVAEQNNYCRPSFHTDSQDIDVVNGRHPVVEKVMTAGSYIPNDVKMDSATNIFLITGPNMSGKSTYMRQMALIAIMAQVGSFVPADSAALPIFDQIFTRIGAADDLISGQSTFMVEMSEANAALQYATKRSLVLFDEIGRGTATYDGMALAGAIVKYLHDKVGAKALFATHYHELTSLDETLDYLKNIHVGATEENGKLIFLHKILPGPADQSYGIHVAQLAGLPRAVLREATKLLKRLEAQGSELAPVSQQLDLFAQPEAASDEVDDNNSENSPMTDAEQEVLDDISNLYLADKTPLQIMQMVANWQKDLKDDK.

Glycine 600–serine 607 contributes to the ATP binding site. The segment at glutamate 803–glutamate 823 is disordered.

It belongs to the DNA mismatch repair MutS family.

Functionally, this protein is involved in the repair of mismatches in DNA. It is possible that it carries out the mismatch recognition step. This protein has a weak ATPase activity. The chain is DNA mismatch repair protein MutS from Lactobacillus helveticus (strain DPC 4571).